A 291-amino-acid polypeptide reads, in one-letter code: Protease HtpX (291 aa).

The next 2 helical transmembrane spans lie at Ile4 to Phe24 and Ile32 to Leu52. His139 lines the Zn(2+) pocket. The active site involves Glu140. His143 contributes to the Zn(2+) binding site. Transmembrane regions (helical) follow at residues Ile158 to Leu178 and Trp192 to Ile212. A Zn(2+)-binding site is contributed by Glu221.

It belongs to the peptidase M48B family. Zn(2+) serves as cofactor.

The protein localises to the cell membrane. This is Protease HtpX from Buchnera aphidicola subsp. Baizongia pistaciae (strain Bp).